A 435-amino-acid chain; its full sequence is MPDRDSYANGTGSSGGGPGGGGSEEASGAGTGSGGATSDAICRDFLRNVCKRGKRCRYRHPDMSEVSNLGVSKNEFIFCHDFQNKECSRPNCRFIHGSKEDEDGYKKTGELPPRLRQKVAAGLGLSPADLPNGKEEVPICRDFLKGDCQRGAKCKFRHLQRDFEFDARGGGGTGGGGSTGSAPPGRRHDLYDIYDLPERGFEDHEPGPKRRRGGCCPPDGPHFESYECNLAPLRGVECRLLEEENALLRKRVEELKKQVSNLLATNEVLLEQNAQFRNQAKVMTLSSTAPATEQTLAPTVGTVATFNHGIAQTHTTLSSQALQPRPVSQQELVAPTGAPAAPPTNAAPPAAPPPPPPHLNPEITPLSAALAQTIAQGMAPPPVSMAPVAVSVAPVAPVAVSMAQPLAGITMSHTTTPMVTYPIASQSMRITAMPH.

Positions 1-36 (MPDRDSYANGTGSSGGGPGGGGSEEASGAGTGSGGA) are disordered. A compositionally biased stretch (gly residues) spans 12–35 (GSSGGGPGGGGSEEASGAGTGSGG). C3H1-type zinc fingers lie at residues 36–63 (ATSD…HPDM), 73–99 (KNEF…HGSK), and 134–161 (KEEV…HLQR). The interval 166–190 (DARGGGGTGGGGSTGSAPPGRRHDL) is disordered. The segment covering 168–179 (RGGGGTGGGGST) has biased composition (gly residues). Residues arginine 186 and arginine 187 each carry the omega-N-methylarginine modification. Residues 235–281 (GVECRLLEEENALLRKRVEELKKQVSNLLATNEVLLEQNAQFRNQAK) adopt a coiled-coil conformation. Residues 315 to 331 (TTLSSQALQPRPVSQQE) are compositionally biased toward polar residues. The segment at 315–363 (TTLSSQALQPRPVSQQELVAPTGAPAAPPTNAAPPAAPPPPPPHLNPEI) is disordered. A compositionally biased stretch (pro residues) spans 340–359 (AAPPTNAAPPAAPPPPPPHL).

The protein localises to the nucleus. In terms of biological role, specific regulator of miRNA biogenesis. Binds, via the C3H1-type zinc finger domains, to the binding motif 5'-GCAGCGC-3' on microRNA pri-MIR143 and negatively regulates the processing to mature microRNA. The protein is Zinc finger CCCH domain-containing protein 10 (Zc3h10) of Mus musculus (Mouse).